Here is a 293-residue protein sequence, read N- to C-terminus: NAD kinase (293 aa).

Asp-72 functions as the Proton acceptor in the catalytic mechanism. Residues 72-73 (DG), 146-147 (ND), Arg-157, Arg-174, Asp-176, 187-192 (TAYALS), and Gln-247 each bind NAD(+).

It belongs to the NAD kinase family. A divalent metal cation serves as cofactor.

The protein localises to the cytoplasm. The enzyme catalyses NAD(+) + ATP = ADP + NADP(+) + H(+). Its function is as follows. Involved in the regulation of the intracellular balance of NAD and NADP, and is a key enzyme in the biosynthesis of NADP. Catalyzes specifically the phosphorylation on 2'-hydroxyl of the adenosine moiety of NAD to yield NADP. This is NAD kinase from Chromohalobacter salexigens (strain ATCC BAA-138 / DSM 3043 / CIP 106854 / NCIMB 13768 / 1H11).